Here is a 391-residue protein sequence, read N- to C-terminus: Formate-dependent phosphoribosylglycinamide formyltransferase (391 aa).

Residues 18–19 and glutamate 78 contribute to the N(1)-(5-phospho-beta-D-ribosyl)glycinamide site; that span reads EL. ATP contacts are provided by residues arginine 110, lysine 151, 156–161, 191–194, and glutamate 199; these read SSGKGQ and EEFI. The ATP-grasp domain occupies 115–305; the sequence is ELAHEELGIR…EFELHLRAIL (191 aa). Residues glutamate 264 and glutamate 276 each coordinate Mg(2+). Residues aspartate 283, lysine 353, and 360 to 361 contribute to the N(1)-(5-phospho-beta-D-ribosyl)glycinamide site; that span reads RR.

It belongs to the PurK/PurT family. Homodimer.

The catalysed reaction is N(1)-(5-phospho-beta-D-ribosyl)glycinamide + formate + ATP = N(2)-formyl-N(1)-(5-phospho-beta-D-ribosyl)glycinamide + ADP + phosphate + H(+). Its pathway is purine metabolism; IMP biosynthesis via de novo pathway; N(2)-formyl-N(1)-(5-phospho-D-ribosyl)glycinamide from N(1)-(5-phospho-D-ribosyl)glycinamide (formate route): step 1/1. Its function is as follows. Involved in the de novo purine biosynthesis. Catalyzes the transfer of formate to 5-phospho-ribosyl-glycinamide (GAR), producing 5-phospho-ribosyl-N-formylglycinamide (FGAR). Formate is provided by PurU via hydrolysis of 10-formyl-tetrahydrofolate. In Nostoc sp. (strain PCC 7120 / SAG 25.82 / UTEX 2576), this protein is Formate-dependent phosphoribosylglycinamide formyltransferase.